Reading from the N-terminus, the 393-residue chain is MSEQTQTCASEIQATNVAVQHPKSEKINLMNLTRQEMRELFAEMGEKPFRADQLMKWIYHFGEDNFDNMSNINKVLREKLKQIAEIKAPEVSVEQRSSDGTIKWAMQVGDQQIETVYIPEDDRATLCVSSQVGCALACKFCSTAQQGFNRNLTVSEIIGQVWRASKIIGNFGVTGVRPITNVVMMGMGEPLLNLNNVIPAMEIMLDDFAYGLSKRRVTLSTAGVVPALDIMREKIDVALAISLHAPNDELRDEIMPINKKYNIKMLMDSVHKYLEVSNANHGKVTIEYVLLDHVNDGTEHAHQLAEVLKNTPCKINLIPWNPFPEAPYGKSSNSRVDRFQKTLMEYGFTVIVRKTRGDDIDAACGQLAGDVIDRTKRTMEKRKFGKGIAVQNH.

The Proton acceptor role is filled by Glu-114. Positions 120-359 constitute a Radical SAM core domain; the sequence is EDDRATLCVS…VIVRKTRGDD (240 aa). A disulfide bridge connects residues Cys-127 and Cys-364. [4Fe-4S] cluster-binding residues include Cys-134, Cys-138, and Cys-141. S-adenosyl-L-methionine-binding positions include 188 to 189, Ser-220, 242 to 244, and Asn-321; these read GE and SLH. Cys-364 functions as the S-methylcysteine intermediate in the catalytic mechanism.

The protein belongs to the radical SAM superfamily. RlmN family. The cofactor is [4Fe-4S] cluster.

The protein resides in the cytoplasm. It carries out the reaction adenosine(2503) in 23S rRNA + 2 reduced [2Fe-2S]-[ferredoxin] + 2 S-adenosyl-L-methionine = 2-methyladenosine(2503) in 23S rRNA + 5'-deoxyadenosine + L-methionine + 2 oxidized [2Fe-2S]-[ferredoxin] + S-adenosyl-L-homocysteine. The enzyme catalyses adenosine(37) in tRNA + 2 reduced [2Fe-2S]-[ferredoxin] + 2 S-adenosyl-L-methionine = 2-methyladenosine(37) in tRNA + 5'-deoxyadenosine + L-methionine + 2 oxidized [2Fe-2S]-[ferredoxin] + S-adenosyl-L-homocysteine. Specifically methylates position 2 of adenine 2503 in 23S rRNA and position 2 of adenine 37 in tRNAs. m2A2503 modification seems to play a crucial role in the proofreading step occurring at the peptidyl transferase center and thus would serve to optimize ribosomal fidelity. The chain is Dual-specificity RNA methyltransferase RlmN from Actinobacillus pleuropneumoniae serotype 3 (strain JL03).